The primary structure comprises 282 residues: Flagellin (282 aa).

Belongs to the bacterial flagellin family.

The protein localises to the secreted. Its subcellular location is the bacterial flagellum. Flagellin is the subunit protein which polymerizes to form the filaments of bacterial flagella. The flagellum is required to cause a persistent disease in a murine model of infection. The polypeptide is Flagellin (fliC) (Brucella melitensis biotype 1 (strain ATCC 23456 / CCUG 17765 / NCTC 10094 / 16M)).